The following is a 342-amino-acid chain: Nicotinate-nucleotide--dimethylbenzimidazole phosphoribosyltransferase (342 aa).

The active-site Proton acceptor is Glu311.

Belongs to the CobT family.

The catalysed reaction is 5,6-dimethylbenzimidazole + nicotinate beta-D-ribonucleotide = alpha-ribazole 5'-phosphate + nicotinate + H(+). The protein operates within nucleoside biosynthesis; alpha-ribazole biosynthesis; alpha-ribazole from 5,6-dimethylbenzimidazole: step 1/2. Catalyzes the synthesis of alpha-ribazole-5'-phosphate from nicotinate mononucleotide (NAMN) and 5,6-dimethylbenzimidazole (DMB). The chain is Nicotinate-nucleotide--dimethylbenzimidazole phosphoribosyltransferase from Vibrio atlanticus (strain LGP32) (Vibrio splendidus (strain Mel32)).